We begin with the raw amino-acid sequence, 144 residues long: Granulocyte-macrophage colony-stimulating factor (144 aa).

Residues 1 to 17 (MWLQNLLLLGTVVCSIS) form the signal peptide. Residue S24 is glycosylated (O-linked (GalNAc...) serine). T27 carries O-linked (GalNAc...) threonine glycosylation. 3 N-linked (GlcNAc...) asparagine glycosylation sites follow: N44, N47, and N54. 2 disulfide bridges follow: C71/C113 and C105/C138.

It belongs to the GM-CSF family. As to quaternary structure, monomer. The signaling GM-CSF receptor complex is a dodecamer of two head-to-head hexamers of two alpha, two beta, and two ligand subunits.

It localises to the secreted. Cytokine that stimulates the growth and differentiation of hematopoietic precursor cells from various lineages, including granulocytes, macrophages, eosinophils and erythrocytes. The sequence is that of Granulocyte-macrophage colony-stimulating factor (CSF2) from Sus scrofa (Pig).